We begin with the raw amino-acid sequence, 362 residues long: Small ribosomal subunit protein uS4m (362 aa).

The region spanning 105-179 is the S4 RNA-binding domain; that stretch reads TRFDVILLRL…FYKEILVEKI (75 aa).

This sequence belongs to the universal ribosomal protein uS4 family. As to quaternary structure, component of the mitochondrial ribosome small subunit.

Its subcellular location is the mitochondrion. This chain is Small ribosomal subunit protein uS4m (RPS4), found in Arabidopsis thaliana (Mouse-ear cress).